Here is a 610-residue protein sequence, read N- to C-terminus: Myoneurin (610 aa).

One can recognise a BTB domain in the interval 24–89 (CDCTVVIGEF…IYTGTLNLDS (66 aa)). The tract at residues 156 to 199 (SEVSTDSVQANPKPRALTKKSSQSKKKKKAFSSQKPGQSKAVQY) is disordered. The segment covering 171-185 (ALTKKSSQSKKKKKA) has biased composition (basic residues). 2 consecutive short sequence motifs (nuclear localization signal) follow at residues 174 to 190 (KKSSQSKKKKKAFSSQK) and 257 to 262 (KRKRRK). 8 C2H2-type zinc fingers span residues 302-324 (PMCNTCGKVFSEASSLRRHMRIH), 330-352 (YVCHLCGKAFTQCNQLKTHVRTH), 358-381 (YKCELCDKGFAQKCQLVFHSRMHH), 387-409 (YKCDVCNLQFATSSNLKIHARKH), 415-437 (YVCDRCGQRFAQASTLTYHVRRH), 443-465 (YVCDTCGKAFAVSSSLITHSRKH), 471-493 (YICGICGKSFISSGELNKHFRSH), and 499-522 (FICELCGNSYTDIKNLKKHKTKVH). Residues 519–548 (TKVHSGTDKNPDCSVDDHAVSEQDSVQRSP) are disordered. Positions 523–539 (SGTDKNPDCSVDDHAVS) are enriched in basic and acidic residues.

Belongs to the krueppel C2H2-type zinc-finger protein family. In terms of tissue distribution, mainly expressed in the neuromuscular system. Located in and around synaptic myonuclei in adult muscle. Expression is dysregulated after nerve injury. Also found in the cerebellum, testis, heart, brain and liver.

The protein resides in the nucleus. This chain is Myoneurin (Mynn), found in Mus musculus (Mouse).